Here is a 461-residue protein sequence, read N- to C-terminus: Transcription factor SOX-10 (461 aa).

5 disordered regions span residues 1–60 (MADD…ADDD), 154–191 (LRMQ…GEAG), 205–268 (LDHR…DFGN), 350–369 (KAQV…DQPS), and 433–461 (AISD…LSRP). Residues 30 to 42 (ASDNSSHLASSGN) are compositionally biased toward polar residues. A dimerization (DIM) region spans residues 56 to 96 (EADDDKFPVCIREAVSQVLSGYDWTLVPMPVRVNGSNKSKP). A DNA-binding region (HMG box) is located at residues 98-166 (VKRPMNAFMV…QHKKDHPDYK (69 aa)). Basic and acidic residues predominate over residues 154 to 167 (LRMQHKKDHPDYKY). The segment covering 181–191 (EGEGQVEGEAG) has biased composition (gly residues). A transactivation domain (TAM) region spans residues 221–306 (PEHSSGQSHG…NGHAGHPGHV (86 aa)). Over residues 247-264 (ADSKREGRSLGEGGKPHI) the composition is skewed to basic and acidic residues. Residues 350 to 461 (KAQVKTEGSA…QPVYTTLSRP (112 aa)) form a transactivation domain (TAC) region. Positions 441-461 (VPQSHSPTHWEQPVYTTLSRP) are enriched in polar residues.

The protein resides in the cytoplasm. Its subcellular location is the nucleus. In terms of biological role, transcription factor that plays a central role in developing and mature glia. Specifically activates expression of myelin genes, during oligodendrocyte (OL) maturation, thereby playing a central role in oligodendrocyte maturation and CNS myelination. The sequence is that of Transcription factor SOX-10 (SOX10) from Gallus gallus (Chicken).